Here is a 283-residue protein sequence, read N- to C-terminus: Putative pyruvate, phosphate dikinase regulatory protein (283 aa).

156-163 contributes to the ADP binding site; sequence GLSRAGKT.

This sequence belongs to the pyruvate, phosphate/water dikinase regulatory protein family. PDRP subfamily.

It carries out the reaction N(tele)-phospho-L-histidyl/L-threonyl-[pyruvate, phosphate dikinase] + ADP = N(tele)-phospho-L-histidyl/O-phospho-L-threonyl-[pyruvate, phosphate dikinase] + AMP + H(+). The enzyme catalyses N(tele)-phospho-L-histidyl/O-phospho-L-threonyl-[pyruvate, phosphate dikinase] + phosphate + H(+) = N(tele)-phospho-L-histidyl/L-threonyl-[pyruvate, phosphate dikinase] + diphosphate. Functionally, bifunctional serine/threonine kinase and phosphorylase involved in the regulation of the pyruvate, phosphate dikinase (PPDK) by catalyzing its phosphorylation/dephosphorylation. This Desulfotalea psychrophila (strain LSv54 / DSM 12343) protein is Putative pyruvate, phosphate dikinase regulatory protein.